The chain runs to 305 residues: Glycine--tRNA ligase alpha subunit (305 aa).

Belongs to the class-II aminoacyl-tRNA synthetase family. As to quaternary structure, tetramer of two alpha and two beta subunits.

The protein resides in the cytoplasm. It carries out the reaction tRNA(Gly) + glycine + ATP = glycyl-tRNA(Gly) + AMP + diphosphate. The chain is Glycine--tRNA ligase alpha subunit from Streptococcus suis (strain 98HAH33).